Reading from the N-terminus, the 36-residue chain is Lambda-hexatoxin-Hv1b (36 aa).

4 cysteine pairs are disulfide-bonded: cysteine 3-cysteine 17, cysteine 10-cysteine 22, cysteine 13-cysteine 14, and cysteine 16-cysteine 33.

This sequence belongs to the neurotoxin 11 (kappa toxin) family. Expressed by the venom gland.

The protein resides in the secreted. This excitatory toxin inhibits insect calcium-activated potassium (KCa) channels (Slo-type). The protein is Lambda-hexatoxin-Hv1b of Hadronyche versuta (Blue mountains funnel-web spider).